The primary structure comprises 114 residues: Fumarate reductase subunit D (114 aa).

3 helical membrane passes run 24–44, 49–69, and 94–114; these read ISAL…PLGI, GIIA…LTIF, and LIFY…VASI.

The protein belongs to the FrdD family. In terms of assembly, part of an enzyme complex containing four subunits: a flavoprotein (FrdA), an iron-sulfur protein (FrdB), and two hydrophobic anchor proteins (FrdC and FrdD).

The protein localises to the cell inner membrane. In terms of biological role, anchors the catalytic components of the fumarate reductase complex to the cell membrane, binds quinones. This chain is Fumarate reductase subunit D, found in Actinobacillus succinogenes (strain ATCC 55618 / DSM 22257 / CCUG 43843 / 130Z).